We begin with the raw amino-acid sequence, 321 residues long: Beta-lactamase (321 aa).

Residues 1 to 30 (MEKNRKKQIVVLSIALVCIFILVFSLFHKS) form the signal peptide. Serine 83 serves as the catalytic Acyl-ester intermediate. 233 to 235 (KTG) is a substrate binding site.

It belongs to the class-A beta-lactamase family.

It catalyses the reaction a beta-lactam + H2O = a substituted beta-amino acid. Inhibited by clavulanic acid. Can hydrolyze cephalosporins, penicillins and also cefoxitin; but at a slow rate. The protein is Beta-lactamase (cfxA) of Phocaeicola vulgatus (Bacteroides vulgatus).